A 61-amino-acid chain; its full sequence is Small ribosomal subunit protein uS14 (61 aa).

Residues C24, C27, C40, and C43 each coordinate Zn(2+).

The protein belongs to the universal ribosomal protein uS14 family. Zinc-binding uS14 subfamily. Part of the 30S ribosomal subunit. Contacts proteins S3 and S10. Zn(2+) serves as cofactor.

Its function is as follows. Binds 16S rRNA, required for the assembly of 30S particles and may also be responsible for determining the conformation of the 16S rRNA at the A site. The sequence is that of Small ribosomal subunit protein uS14 from Desulforamulus reducens (strain ATCC BAA-1160 / DSM 100696 / MI-1) (Desulfotomaculum reducens).